Consider the following 247-residue polypeptide: Probable transcriptional regulatory protein Asuc_1803 (247 aa).

The protein belongs to the TACO1 family.

The protein localises to the cytoplasm. In Actinobacillus succinogenes (strain ATCC 55618 / DSM 22257 / CCUG 43843 / 130Z), this protein is Probable transcriptional regulatory protein Asuc_1803.